Reading from the N-terminus, the 741-residue chain is Protein ACCUMULATION AND REPLICATION OF CHLOROPLASTS 3, chloroplastic (741 aa).

Residues 1 to 41 (MPISMELPVFSTLRVPLFSRLALLPTFGVPFSSLGATTRLN) constitute a chloroplast transit peptide. Disordered regions lie at residues 444-465 (ENGDDSEYPLKEGEPSRNSRLD) and 539-558 (DSREESFFNPNGSTKDSSDT). Residues 451–465 (YPLKEGEPSRNSRLD) are compositionally biased toward basic and acidic residues. Over residues 546–558 (FNPNGSTKDSSDT) the composition is skewed to polar residues. MORN repeat units lie at residues 612–628 (QGGLPEGKGRLVLGDGS), 630–652 (YDGMWHNGKRSGLGTFYFKNGDV), and 653–675 (FQGTWREDLIHGKGWFYFHKGDR).

Self-interacts. Interacts with FTSZ, CDP1/PARC6 (via N-terminus), MIND1 and MINE1. Part of a complex made of ARC3, ARC6, FTSZ1 and FTSZ2. Recruited to the middle of the plastid by CDP1/PARC6 where subsequent complex made of CDP1/PARC6, ARC3 and FtsZ proteins can form; this complex enhances the dynamics of Z rings during chloroplast division. Binding to FTSZ2-1 is enabled by ARC6.

The protein resides in the plastid. It localises to the chloroplast outer membrane. The protein localises to the chloroplast stroma. In terms of biological role, together with MIND1 and MCD1, regulates FtsZ ring positioning in chloroplasts in an ARC6-dependent manner. Z-ring accessory protein involved in the initiation of plastid division and division site placement (might functionally replace bacterial MinC). Acts as a disassembly factor that accelerates fragmentation and depolymerization of existing FtsZ2 filaments by enhancing FTSZ2 GTPase activity, thus leading to the conversion of FTSZ2 bound GTP into GDP, a process which triggers FtsZ2 filaments destabilization. Prevents misplaced Z-ring formation at chloroplast stroma nondivision sites. May control the rate of chloroplast expansion. Seems to influence stromule (stroma-filled tubular extensions of the plastid envelope membrane) length and frequency. The protein is Protein ACCUMULATION AND REPLICATION OF CHLOROPLASTS 3, chloroplastic of Arabidopsis thaliana (Mouse-ear cress).